A 277-amino-acid polypeptide reads, in one-letter code: UPF0276 protein PSEEN3355 (277 aa).

It belongs to the UPF0276 family.

The sequence is that of UPF0276 protein PSEEN3355 from Pseudomonas entomophila (strain L48).